The following is a 662-amino-acid chain: MFNEKDQLAIDTIRALSIDAIEKANSGHPGLPMGAAPMAYTLWTRHLNFNPQSKDFFNRDRFILSAGHGSALLYSLLHVSGSLELEELKQFRQWGSKTPGHPEYRHTDGVEVTTGPLGQGFAMSVGMALAESHLAGKFNKDQFDIVNHYTYVLASDGDLMEGISHEAASFAGHNQLDKLIVLYDSNDISLDGDLDKSFSEDTKQRFEAYGWNYILVENGNDLDEIDNAITQAKSQQGPTIIEVKTIIGFGSPNKAGSNGVHGAPLGEEERALTFKEYGLDPEKRFNVPEDVYEIFKSTMLKRANENEEAWNNMLKNYSEAYPELAEEFKLAMSGKLPNNYADALPEYDLNHSGASRADSGEIIQKLSEFVPSFFGGSADLAGSNKSNVKEAKDYNKDTPEGKNVWFGVREFAMGAAINGMAAHGGLHPYAATFFVFSDYLKPALRLSSIMGLNSTFIFTHDSIAVGEDGPTHEPIEQLAGLRAIPNMNVIRPADGNETRVAWEVALESEHTPTSLVLTRQNLPTLDVDKQTVENGVRKGAYIVFETEQQLEYLLLASGSEVNLAVEAAKELEQQGKGVRVISMPNWYAFEQQSSEYKESILPSDVTKRIAIEMASPLGWHKYVGIEGKVIGINSFGASAPGDLVVEKYGFTKENILKQVRSL.

H28 is a binding site for substrate. Residues H68 and 115 to 117 (GPL) contribute to the thiamine diphosphate site. A Mg(2+)-binding site is contributed by D156. Thiamine diphosphate-binding residues include G157 and N186. 2 residues coordinate Mg(2+): N186 and I188. Substrate-binding residues include H261, R356, and S383. H261 serves as a coordination point for thiamine diphosphate. The Proton donor role is filled by E410. F436 lines the thiamine diphosphate pocket. Positions 460, 468, and 519 each coordinate substrate.

The protein belongs to the transketolase family. Homodimer. Mg(2+) serves as cofactor. It depends on Ca(2+) as a cofactor. Requires Mn(2+) as cofactor. Co(2+) is required as a cofactor. The cofactor is thiamine diphosphate.

The catalysed reaction is D-sedoheptulose 7-phosphate + D-glyceraldehyde 3-phosphate = aldehydo-D-ribose 5-phosphate + D-xylulose 5-phosphate. It functions in the pathway carbohydrate biosynthesis; Calvin cycle. Its pathway is carbohydrate degradation; pentose phosphate pathway. Functionally, catalyzes the transfer of a two-carbon ketol group from a ketose donor to an aldose acceptor, via a covalent intermediate with the cofactor thiamine pyrophosphate. In Staphylococcus epidermidis (strain ATCC 12228 / FDA PCI 1200), this protein is Transketolase (tkt).